The primary structure comprises 690 residues: Eukaryotic translation initiation factor 3 subunit B (690 aa).

Residues 1–11 (MAKKKSEEHSS) show a composition bias toward basic and acidic residues. The tract at residues 1 to 33 (MAKKKSEEHSSADANDSDYQEEPNFDDPPNFVD) is disordered. Acidic residues predominate over residues 15–25 (NDSDYQEEPNF). In terms of domain architecture, RRM spans 57–141 (SVVVVDNIPK…HTFAVNLFTD (85 aa)). 5 WD repeats span residues 207 to 246 (TRERFTDTFVKWSPLGTYVVTFHKPGVAIWGGSNFQKIQK), 293 to 331 (DGMSVLSMFRWSHDDKFVARMGENSIHIYETPSFYLLDL), 334 to 369 (IKIPGIRGFSWSPTDNVIAYWVEEQNQIPARVTLME), 442 to 484 (EIRE…KPSL), and 530 to 575 (PDHF…IKRT). The stretch at 614–645 (QKDRLRLTRASKELLEKRSQLRETFMEYRNKR) forms a coiled coil.

This sequence belongs to the eIF-3 subunit B family. As to quaternary structure, component of the eukaryotic translation initiation factor 3 (eIF-3) complex. The eIF-3 complex interacts with pix. Interacts with mxt.

It localises to the cytoplasm. Functionally, RNA-binding component of the eukaryotic translation initiation factor 3 (eIF-3) complex, which is involved in protein synthesis of a specialized repertoire of mRNAs and, together with other initiation factors, stimulates binding of mRNA and methionyl-tRNAi to the 40S ribosome. The eIF-3 complex specifically targets and initiates translation of a subset of mRNAs involved in cell proliferation. This is Eukaryotic translation initiation factor 3 subunit B from Drosophila willistoni (Fruit fly).